The sequence spans 553 residues: Mannuronan C5-epimerase AlgE4 (553 aa).

PbH1 repeat units lie at residues 133-155, 157-179, 180-202, 204-226, 234-256, 257-279, 280-301, and 320-342; these read DRDV…DPHE, TINL…VADY, LVDS…NVVT, THDF…VVQR, PSNI…LLKM, TSDI…RVYG, AQDV…AVPE, and TLNT…GIQE. The tract at residues 367–427 is disordered; sequence YGPHSTVSGE…DILDGGAGRD (61 aa). Hemolysin-type calcium-binding repeat units lie at residues 403–420 and 421–438; these read QGGS…DDIL and DGGA…ADTF.

Belongs to the D-mannuronate C5-epimerase family. Ca(2+) serves as cofactor.

Its subcellular location is the secreted. It catalyses the reaction [(1-&gt;4)-beta-D-mannuronosyl](n) = [alginate](n). Its pathway is glycan biosynthesis; alginate biosynthesis. Its activity is regulated as follows. Inhibited by zinc. In terms of biological role, converts beta-D-mannuronic acid (M) to alpha-L-guluronic acid (G), but introduces almost exclusively MG blocks, producing a polymer with non-gel-forming capacity. The protein is Mannuronan C5-epimerase AlgE4 of Azotobacter vinelandii.